The chain runs to 348 residues: Phospho-2-dehydro-3-deoxyheptonate aldolase, Trp-sensitive (348 aa).

The protein belongs to the class-I DAHP synthase family.

It carries out the reaction D-erythrose 4-phosphate + phosphoenolpyruvate + H2O = 7-phospho-2-dehydro-3-deoxy-D-arabino-heptonate + phosphate. It functions in the pathway metabolic intermediate biosynthesis; chorismate biosynthesis; chorismate from D-erythrose 4-phosphate and phosphoenolpyruvate: step 1/7. In terms of biological role, stereospecific condensation of phosphoenolpyruvate (PEP) and D-erythrose-4-phosphate (E4P) giving rise to 3-deoxy-D-arabino-heptulosonate-7-phosphate (DAHP). The sequence is that of Phospho-2-dehydro-3-deoxyheptonate aldolase, Trp-sensitive (aroH) from Salmonella typhimurium (strain LT2 / SGSC1412 / ATCC 700720).